The following is a 118-amino-acid chain: Putative membrane protein insertion efficiency factor (118 aa).

The protein belongs to the UPF0161 family.

It localises to the cell inner membrane. Functionally, could be involved in insertion of integral membrane proteins into the membrane. This is Putative membrane protein insertion efficiency factor from Helicobacter pylori (strain HPAG1).